We begin with the raw amino-acid sequence, 573 residues long: Probable pectinesterase/pectinesterase inhibitor 41 (573 aa).

Positions 1 to 22 (MLSLKLFLVTLFLSLQTLFIAS) are cleaved as a signal peptide. Residues 25–184 (LLPSNSSSTI…TKLFSVSLAL (160 aa)) form a pectinesterase inhibitor 41 region. Residues Asn29, Asn119, Asn173, Asn264, Asn268, Asn281, and Asn320 are each glycosylated (N-linked (GlcNAc...) asparagine). Residues 259–557 (VTVNQNGTGN…FTVENFLLGD (299 aa)) form a pectinesterase 41 region. Thr336 contacts substrate. N-linked (GlcNAc...) asparagine glycosylation occurs at Asn353. Gln366 lines the substrate pocket. Residue Asp389 is the Proton donor; for pectinesterase activity of the active site. Cysteines 403 and 423 form a disulfide. The Nucleophile; for pectinesterase activity role is filled by Asp410. 2 N-linked (GlcNAc...) asparagine glycosylation sites follow: Asn456 and Asn469. 2 residues coordinate substrate: Arg478 and Trp480. Residues Asn520, Asn541, and Asn547 are each glycosylated (N-linked (GlcNAc...) asparagine).

The protein in the N-terminal section; belongs to the PMEI family. This sequence in the C-terminal section; belongs to the pectinesterase family. Expressed in flowers, siliques, floral stems and rosettes leaves.

It is found in the secreted. Its subcellular location is the cell wall. It carries out the reaction [(1-&gt;4)-alpha-D-galacturonosyl methyl ester](n) + n H2O = [(1-&gt;4)-alpha-D-galacturonosyl](n) + n methanol + n H(+). Its pathway is glycan metabolism; pectin degradation; 2-dehydro-3-deoxy-D-gluconate from pectin: step 1/5. In terms of biological role, acts in the modification of cell walls via demethylesterification of cell wall pectin. The polypeptide is Probable pectinesterase/pectinesterase inhibitor 41 (PME41) (Arabidopsis thaliana (Mouse-ear cress)).